Consider the following 41-residue polypeptide: Large ribosomal subunit protein bL36 (41 aa).

The protein belongs to the bacterial ribosomal protein bL36 family.

This chain is Large ribosomal subunit protein bL36, found in Parvibaculum lavamentivorans (strain DS-1 / DSM 13023 / NCIMB 13966).